The primary structure comprises 79 residues: uncharacterized protein (79 aa).

Its subcellular location is the mitochondrion. This is an uncharacterized protein from Oenothera berteroana (Bertero's evening primrose).